The primary structure comprises 137 residues: Probable 4-amino-4-deoxy-L-arabinose-phosphoundecaprenol flippase subunit ArnF (137 aa).

The next 3 membrane-spanning stretches (helical) occupy residues 43-63 (AIAVICASITAYALSMLFWLL), 74-94 (YSLLSISYALVYTLAATLPFF), and 98-118 (FTVSKTVGVTLIVAGVLTINL).

It belongs to the ArnF family. In terms of assembly, heterodimer of ArnE and ArnF.

Its subcellular location is the cell inner membrane. It participates in bacterial outer membrane biogenesis; lipopolysaccharide biosynthesis. Functionally, translocates 4-amino-4-deoxy-L-arabinose-phosphoundecaprenol (alpha-L-Ara4N-phosphoundecaprenol) from the cytoplasmic to the periplasmic side of the inner membrane. This Pseudomonas savastanoi pv. phaseolicola (strain 1448A / Race 6) (Pseudomonas syringae pv. phaseolicola (strain 1448A / Race 6)) protein is Probable 4-amino-4-deoxy-L-arabinose-phosphoundecaprenol flippase subunit ArnF.